Reading from the N-terminus, the 770-residue chain is Shutoff protein (770 aa).

2 disordered regions span residues 1–20 (MEED…PNSE) and 30–49 (EEEN…PEDG). Residues 10–19 (DSETLTTPNS) show a composition bias toward polar residues. Positions 248–312 (VMDQVLIKRA…AVLVTVELEC (65 aa)) are binding to host EIF4G. The RRM domain maps to 315-433 (RFFANPQTLR…ELWTSFDERT (119 aa)). Phosphotyrosine; by host occurs at positions 332 and 647. A disordered region spans residues 661–770 (LSAAASCRSQ…TATMFTESQP (110 aa)). Residues 726–739 (GGPRGRGGRNHRQR) show a composition bias toward basic residues. Over residues 742–755 (TIFQKTRSEPTSEN) the composition is skewed to polar residues.

It belongs to the adenoviridae shutoff protein family. As to quaternary structure, monomer. Interacts with hexon protein; this interaction allows chaperoning and trimerization of hexon proteins. Interacts (via N-terminus) with host initiation factor EIF4G (via C-terminus). Interacts (via RRM domain) with viral mRNAs that contain the tripartite leader; this interaction allows ribosome shunting and expression of viral late mRNAs. Might be cleaved by the viral protease. Post-translationally, phosphorylated. Tyrosine phosphorylation enhances preferential binding to tripartite leader mRNAs and allows ribosome shunting. In terms of processing, methylated. Asymmetric dimethylation by host PRMT1 of the Arg/Gly-rich region may regulate shutoff protein binding to hexon and promote the capsid assembly in the nucleus.

The protein resides in the host cytoplasm. Its function is as follows. Protein that inhibits host translation while promoting late viral translation by ribosome shunting. Blocks host cap-dependent translation by binding to eIF4G, displacing MKNK1 from cap initiation complexes and preventing EIF4E phosphorylation. Binds to the tripartite leader sequence of viral late mRNAs and recruits host eIF4G, PABPC1/poly-A binding protein and 40S ribosomes subunits on viral mRNAs, allowing ribosome shunting and efficient translation of late viral mRNAs even though conventional translation via ribosome scanning from the cap has been shut off in the host cell. During assembly, acts as a chaperone protein that helps hexon proteins assembly into trimers. The chain is Shutoff protein from Human adenovirus F serotype 40 (HAdV-40).